A 206-amino-acid polypeptide reads, in one-letter code: Protein-methionine-sulfoxide reductase heme-binding subunit MsrQ (206 aa).

6 helical membrane passes run 7–27, 43–63, 77–97, 112–132, 142–162, and 172–192; these read IIIH…LLSG, FLGF…KVFY, LGLW…ALEL, GYLI…LSSW, WWFY…IHYV, and SMLY…GLFI.

It belongs to the MsrQ family. As to quaternary structure, heterodimer of a catalytic subunit (MsrP) and a heme-binding subunit (MsrQ). It depends on FMN as a cofactor. Heme b serves as cofactor.

The protein resides in the cell inner membrane. Its function is as follows. Part of the MsrPQ system that repairs oxidized periplasmic proteins containing methionine sulfoxide residues (Met-O), using respiratory chain electrons. Thus protects these proteins from oxidative-stress damage caused by reactive species of oxygen and chlorine generated by the host defense mechanisms. MsrPQ is essential for the maintenance of envelope integrity under bleach stress, rescuing a wide series of structurally unrelated periplasmic proteins from methionine oxidation. MsrQ provides electrons for reduction to the reductase catalytic subunit MsrP, using the quinone pool of the respiratory chain. In Pasteurella multocida (strain Pm70), this protein is Protein-methionine-sulfoxide reductase heme-binding subunit MsrQ.